A 516-amino-acid polypeptide reads, in one-letter code: Thiosulfate sulfurtransferase/rhodanese-like domain-containing protein 2 (516 aa).

Position 269 is a phosphoserine (serine 269). The region spanning 301 to 396 (EQSDTILLDC…YLEEFPDGFY (96 aa)) is the Rhodanese domain. Cysteine 355 serves as the catalytic Cysteine persulfide intermediate. The segment at 490 to 516 (RELLQHVRQPVSPEPGPDAEEDGPVLV) is disordered. Residues 506–516 (PDAEEDGPVLV) are compositionally biased toward acidic residues.

The protein is Thiosulfate sulfurtransferase/rhodanese-like domain-containing protein 2 (TSTD2) of Pongo abelii (Sumatran orangutan).